We begin with the raw amino-acid sequence, 127 residues long: Small ribosomal subunit protein uS13 (127 aa).

The tract at residues 100–127 (GQRTRTNARTRKGVRKTVAGKKKAPAKK) is disordered. Over residues 101-127 (QRTRTNARTRKGVRKTVAGKKKAPAKK) the composition is skewed to basic residues.

The protein belongs to the universal ribosomal protein uS13 family. In terms of assembly, part of the 30S ribosomal subunit. Forms a loose heterodimer with protein S19. Forms two bridges to the 50S subunit in the 70S ribosome.

In terms of biological role, located at the top of the head of the 30S subunit, it contacts several helices of the 16S rRNA. In the 70S ribosome it contacts the 23S rRNA (bridge B1a) and protein L5 of the 50S subunit (bridge B1b), connecting the 2 subunits; these bridges are implicated in subunit movement. Contacts the tRNAs in the A and P-sites. The polypeptide is Small ribosomal subunit protein uS13 (Synechococcus sp. (strain JA-3-3Ab) (Cyanobacteria bacterium Yellowstone A-Prime)).